We begin with the raw amino-acid sequence, 817 residues long: Putative receptor protein kinase ZmPK1 (817 aa).

The N-terminal stretch at 1–28 (MPRPLAALLSTACILSFFIALFPRAASS) is a signal peptide. Positions 29-158 (RDILPLGSSL…GGNTVWQSFD (130 aa)) constitute a Bulb-type lectin domain. Residues 29–472 (RDILPLGSSL…HKTGGGESKW (444 aa)) lie on the Extracellular side of the membrane. N-linked (GlcNAc...) asparagine glycosylation is found at N83, N128, N228, and N279. Residues 292–328 (MTQPCNIHGLCGPNGICHYSPTPTCSCPPGYATRNPG) form the EGF-like domain. 2 disulfides stabilise this stretch: C296/C308 and C302/C316. N329 and N339 each carry an N-linked (GlcNAc...) asparagine glycan. The 83-residue stretch at 342–424 (CDRYDKRSMR…VRTIYLKLPT (83 aa)) folds into the PAN domain. 2 cysteine pairs are disulfide-bonded: C376–C398 and C384–C386. An N-linked (GlcNAc...) asparagine glycan is attached at N452. A helical transmembrane segment spans residues 473–498 (FYFYGFIAAFFVVEVSFISFAWFFVL). The Cytoplasmic segment spans residues 499–817 (KRELRPSELW…AVQTLLSADD (319 aa)). The region spanning 534 to 817 (RKFKVELGRG…AVQTLLSADD (284 aa)) is the Protein kinase domain. ATP-binding positions include 540 to 548 (LGRGESGTV) and K562. The active-site Proton acceptor is D658.

The protein belongs to the protein kinase superfamily. Ser/Thr protein kinase family. Expressed predominantly in the shoots and roots of young maize seedlings, and to a lesser extent in the silks.

Its subcellular location is the membrane. It catalyses the reaction L-seryl-[protein] + ATP = O-phospho-L-seryl-[protein] + ADP + H(+). The enzyme catalyses L-threonyl-[protein] + ATP = O-phospho-L-threonyl-[protein] + ADP + H(+). In terms of biological role, probable receptor. Interaction with a ligand in the extracellular domain triggers the protein kinase activity of the cytoplasmic domain. This chain is Putative receptor protein kinase ZmPK1 (PK1), found in Zea mays (Maize).